The primary structure comprises 279 residues: Dehydrogenase/reductase SDR family member 4 (279 aa).

Residue 37 to 61 (LVTASTDGIGFAIARRLAQDGAHVV) participates in NADP(+) binding. Lys93 carries the N6-acetyllysine; alternate modification. Position 93 is an N6-succinyllysine; alternate (Lys93). Lys106 is subject to N6-acetyllysine. Ser170 lines the substrate pocket. The Proton acceptor role is filled by Tyr183. Residue Lys187 coordinates NADP(+). Ser221 is subject to Phosphoserine. Lys235 carries the N6-succinyllysine modification. Positions 277-279 (SHL) match the Peroxisomal targeting signal motif.

It belongs to the short-chain dehydrogenases/reductases (SDR) family. As to quaternary structure, homotetramer.

It localises to the peroxisome. It catalyses the reaction a secondary alcohol + NADP(+) = a ketone + NADPH + H(+). The catalysed reaction is 3alpha-hydroxy-5beta-pregnan-20-one + NADP(+) = 5beta-pregnan-3,20-dione + NADPH + H(+). It carries out the reaction 5beta-dihydrotestosterone + NADPH + H(+) = 5beta-androstane-3alpha,17beta-diol + NADP(+). The enzyme catalyses all-trans-retinol + NADP(+) = all-trans-retinal + NADPH + H(+). It catalyses the reaction isatin + NADPH + H(+) = 3-hydroxyindolin-2-one + NADP(+). In terms of biological role, NADPH-dependent oxidoreductase which catalyzes the reduction of a variety of compounds bearing carbonyl groups including ketosteroids, alpha-dicarbonyl compounds, aldehydes, aromatic ketones and quinones. Reduces all-trans-retinal and 9-cis retinal. Reduces 3-ketosteroids and benzil into 3alpha-hydroxysteroids and S-benzoin, respectively, in contrast to the stereoselectivity of primates DHRS4s which produce 3beta-hydroxysteroids and R-benzoin. In the reverse reaction, catalyzes the NADP-dependent oxidation of 3alpha-hydroxysteroids and alcohol, but with much lower efficiency. Involved in the metabolism of 3alpha-hydroxysteroids, retinoid, isatin and xenobiotic carbonyl compounds. This chain is Dehydrogenase/reductase SDR family member 4 (DHRS4), found in Bos taurus (Bovine).